A 760-amino-acid chain; its full sequence is General transcription and DNA repair factor IIH helicase subunit XPD (760 aa).

The region spanning 7–283 is the Helicase ATP-binding domain; that stretch reads GLLVYFPYDY…KETDEQRLRD (277 aa). 42-49 contacts ATP; it reads MPSGTGKT. [4Fe-4S] cluster contacts are provided by Cys116, Cys134, Cys155, and Cys190. The short motif at 234–237 is the DEAH box element; sequence DEAH. The mediates interaction with MMS19 stretch occupies residues 438-637; that stretch reads MDASLAIKPV…TQSRILKARL (200 aa).

This sequence belongs to the helicase family. RAD3/XPD subfamily. As to quaternary structure, component of the 7-subunit TFIIH core complex composed of XPB/ERCC3, XPD/ERCC2, GTF2H1, GTF2H2, GTF2H3, GTF2H4 and GTF2H5, which is active in NER. The core complex associates with the 3-subunit CDK-activating kinase (CAK) module composed of CCNH/cyclin H, CDK7 and MNAT1 to form the 10-subunit holoenzyme (holo-TFIIH) active in transcription. The interaction with GTF2H2 results in the stimulation of the 5'--&gt;3' helicase activity. Component of the MMXD complex, which includes CIAO1, ERCC2, CIAO2B, MMS19 and SLC25A5. Interacts with CIAO1 and CIAO2B; the interaction WITH CIAO2B is direct. Interacts with ATF7IP. Interacts directly with MMS19. Part of TBP-based Pol II pre-initiation complex (PIC), in which Pol II core assembles with general transcription factors and other specific initiation factors including GTF2E1, GTF2E2, GTF2F1, GTF2F2, TCEA1, ERCC2, ERCC3, GTF2H2, GTF2H3, GTF2H4, GTF2H5, GTF2A1, GTF2A2, GTF2B and TBP; this large multi-subunit PIC complex mediates DNA unwinding and targets Pol II core to the transcription start site where the first phosphodiester bond forms. Mg(2+) is required as a cofactor. It depends on [4Fe-4S] cluster as a cofactor. ISGylated.

It is found in the nucleus. The protein localises to the cytoplasm. Its subcellular location is the cytoskeleton. The protein resides in the spindle. It catalyses the reaction Couples ATP hydrolysis with the unwinding of duplex DNA at the replication fork by translocating in the 5'-3' direction. This creates two antiparallel DNA single strands (ssDNA). The leading ssDNA polymer is the template for DNA polymerase III holoenzyme which synthesizes a continuous strand.. The catalysed reaction is ATP + H2O = ADP + phosphate + H(+). In terms of biological role, ATP-dependent 5'-3' DNA helicase, component of the general transcription and DNA repair factor IIH (TFIIH) core complex, which is involved in general and transcription-coupled nucleotide excision repair (NER) of damaged DNA and, when complexed to CDK-activating kinase (CAK), involved in transcription by RNA polymerase II. In NER, TFIIH acts by opening DNA around the lesion to allow the excision of the damaged oligonucleotide and its replacement by a new DNA fragment. The ATP-dependent helicase activity of XPD/ERCC2 is required for DNA opening. In transcription, TFIIH has an essential role in transcription initiation. When the pre-initiation complex (PIC) has been established, TFIIH is required for promoter opening and promoter escape. Phosphorylation of the C-terminal tail (CTD) of the largest subunit of RNA polymerase II by the kinase module CAK controls the initiation of transcription. XPD/ERCC2 acts by forming a bridge between CAK and the core-TFIIH complex. Involved in the regulation of vitamin-D receptor activity. As part of the mitotic spindle-associated MMXD complex it plays a role in chromosome segregation. Might have a role in aging process and could play a causative role in the generation of skin cancers. The protein is General transcription and DNA repair factor IIH helicase subunit XPD (Ercc2) of Mus musculus (Mouse).